A 264-amino-acid polypeptide reads, in one-letter code: uncharacterized protein (264 aa).

The helical transmembrane segment at 182 to 198 (TVTGVSNALGFIIAALL) threads the bilayer.

To E.coli YjiC.

The protein resides in the membrane. This is an uncharacterized protein from Escherichia coli (strain K12).